Here is a 563-residue protein sequence, read N- to C-terminus: Putative cysteine ligase BshC (563 aa).

Residues 474–506 (LEQSLMGTSKQAEKALDTLRQKTQRANRRKHDE) adopt a coiled-coil conformation.

The protein belongs to the BshC family.

This Prosthecochloris aestuarii (strain DSM 271 / SK 413) protein is Putative cysteine ligase BshC.